The chain runs to 426 residues: MLDPKLVRTQPQEVAARLATRGFQLDVARIEALEEQRKSVQTRTEQLQAERNARSKAIGQAKQRGEDIAPLLADVDRMGSELEEGKRQLDAIQGELDSMLLGIPNLPHESVPVGADEDANVEVRRWGMPKTFDFEVKDHVALGERHGWLDFETAAKLSGARFALMRGPIARLHRALAQFMINLHTAEHGYEEAYTPYLVQAPALQGTGQLPKFEEDLFKIGRDGEADLYLIPTAEVSLTNIVSGQILDARQLPLKFVAHTPCFRSEAGASGRDTRGMIRQHQFDKVEMVQIVDPATSYEALEGLTANAERVLQLLELPYRVLALCTGDMGFGATKTYDLEVWVPSQDKYREISSCSNCGDFQARRMQARYRNPETGKPELVHTLNGSGLAVGRTLVAVLENYQQADGSIRVPDVLKPYMGGIEVIG.

233 to 235 (TAE) lines the L-serine pocket. 264-266 (RSE) is an ATP binding site. Residue Glu287 coordinates L-serine. Residue 351–354 (EISS) coordinates ATP. Ser387 provides a ligand contact to L-serine.

Belongs to the class-II aminoacyl-tRNA synthetase family. Type-1 seryl-tRNA synthetase subfamily. In terms of assembly, homodimer. The tRNA molecule binds across the dimer.

The protein resides in the cytoplasm. It catalyses the reaction tRNA(Ser) + L-serine + ATP = L-seryl-tRNA(Ser) + AMP + diphosphate + H(+). The catalysed reaction is tRNA(Sec) + L-serine + ATP = L-seryl-tRNA(Sec) + AMP + diphosphate + H(+). Its pathway is aminoacyl-tRNA biosynthesis; selenocysteinyl-tRNA(Sec) biosynthesis; L-seryl-tRNA(Sec) from L-serine and tRNA(Sec): step 1/1. Its function is as follows. Catalyzes the attachment of serine to tRNA(Ser). Is also able to aminoacylate tRNA(Sec) with serine, to form the misacylated tRNA L-seryl-tRNA(Sec), which will be further converted into selenocysteinyl-tRNA(Sec). The protein is Serine--tRNA ligase of Pseudomonas paraeruginosa (strain DSM 24068 / PA7) (Pseudomonas aeruginosa (strain PA7)).